We begin with the raw amino-acid sequence, 257 residues long: Large ribosomal subunit protein bL28m (257 aa).

The N-terminal 55 residues, 1–55 (MPLHRYPVHLWQKLRLRQGICARLPAHFLRSLEEERTPTPVHYKPHGTKFKINPK), are a transit peptide targeting the mitochondrion.

It belongs to the bacterial ribosomal protein bL28 family. As to quaternary structure, component of the mitochondrial ribosome large subunit (39S) which comprises a 16S rRNA and about 50 distinct proteins. Interacts with OXA1L.

Its subcellular location is the mitochondrion. This is Large ribosomal subunit protein bL28m (Mrpl28) from Mus musculus (Mouse).